Here is a 76-residue protein sequence, read N- to C-terminus: Putative membrane protein insertion efficiency factor (76 aa).

This sequence belongs to the UPF0161 family.

It is found in the cell inner membrane. Functionally, could be involved in insertion of integral membrane proteins into the membrane. This is Putative membrane protein insertion efficiency factor from Porphyromonas gingivalis (strain ATCC 33277 / DSM 20709 / CIP 103683 / JCM 12257 / NCTC 11834 / 2561).